We begin with the raw amino-acid sequence, 256 residues long: Enolase-phosphatase E1 (256 aa).

Positions 14 and 16 each coordinate Mg(2+). Substrate contacts are provided by residues 142–143 (SS) and Lys176. Asp201 provides a ligand contact to Mg(2+).

It belongs to the HAD-like hydrolase superfamily. MasA/MtnC family. Monomer. It depends on Mg(2+) as a cofactor.

The protein localises to the cytoplasm. It is found in the nucleus. It carries out the reaction 5-methylsulfanyl-2,3-dioxopentyl phosphate + H2O = 1,2-dihydroxy-5-(methylsulfanyl)pent-1-en-3-one + phosphate. It participates in amino-acid biosynthesis; L-methionine biosynthesis via salvage pathway; L-methionine from S-methyl-5-thio-alpha-D-ribose 1-phosphate: step 3/6. The protein operates within amino-acid biosynthesis; L-methionine biosynthesis via salvage pathway; L-methionine from S-methyl-5-thio-alpha-D-ribose 1-phosphate: step 4/6. Bifunctional enzyme that catalyzes the enolization of 2,3-diketo-5-methylthiopentyl-1-phosphate (DK-MTP-1-P) into the intermediate 2-hydroxy-3-keto-5-methylthiopentenyl-1-phosphate (HK-MTPenyl-1-P), which is then dephosphorylated to form the acireductone 1,2-dihydroxy-3-keto-5-methylthiopentene (DHK-MTPene). The chain is Enolase-phosphatase E1 from Drosophila yakuba (Fruit fly).